We begin with the raw amino-acid sequence, 127 residues long: Large ribosomal subunit protein bL17 (127 aa).

It belongs to the bacterial ribosomal protein bL17 family. Part of the 50S ribosomal subunit. Contacts protein L32.

In Lacticaseibacillus casei (strain BL23) (Lactobacillus casei), this protein is Large ribosomal subunit protein bL17.